Here is an 882-residue protein sequence, read N- to C-terminus: Translation initiation factor IF-2 (882 aa).

2 disordered regions span residues 95-176 (PSVT…ASSL) and 229-289 (EHAR…SALQ). Positions 116–133 (TKNTFSQESLNKTSPQKS) are enriched in polar residues. Basic and acidic residues-rich tracts occupy residues 137–172 (KAIE…REAE) and 229–246 (EHAR…EGDR). Residues 247–262 (RSRHRGTKTTKQKKTN) show a composition bias toward basic residues. The span at 263–276 (KLSESKTDREEARA) shows a compositional bias: basic and acidic residues. The region spanning 382-551 (HRAPVVTIMG…LLQAEVLELK (170 aa)) is the tr-type G domain. Residues 391-398 (GHVDHGKT) form a G1 region. Position 391 to 398 (391 to 398 (GHVDHGKT)) interacts with GTP. A G2 region spans residues 416–420 (GITQH). The tract at residues 437–440 (DTPG) is G3. Residues 437 to 441 (DTPGH) and 491 to 494 (NKID) contribute to the GTP site. Residues 491–494 (NKID) are G4. The interval 527–529 (SAK) is G5.

The protein belongs to the TRAFAC class translation factor GTPase superfamily. Classic translation factor GTPase family. IF-2 subfamily.

The protein resides in the cytoplasm. One of the essential components for the initiation of protein synthesis. Protects formylmethionyl-tRNA from spontaneous hydrolysis and promotes its binding to the 30S ribosomal subunits. Also involved in the hydrolysis of GTP during the formation of the 70S ribosomal complex. The polypeptide is Translation initiation factor IF-2 (Hamiltonella defensa subsp. Acyrthosiphon pisum (strain 5AT)).